A 156-amino-acid polypeptide reads, in one-letter code: 6,7-dimethyl-8-ribityllumazine synthase (156 aa).

5-amino-6-(D-ribitylamino)uracil-binding positions include Phe22, 57-59 (AYE), and 81-83 (SVI). (2S)-2-hydroxy-3-oxobutyl phosphate is bound at residue 86-87 (GT). Residue His89 is the Proton donor of the active site. Phe114 provides a ligand contact to 5-amino-6-(D-ribitylamino)uracil. Arg128 contacts (2S)-2-hydroxy-3-oxobutyl phosphate.

The protein belongs to the DMRL synthase family. In terms of assembly, forms an icosahedral capsid composed of 60 subunits, arranged as a dodecamer of pentamers.

The catalysed reaction is (2S)-2-hydroxy-3-oxobutyl phosphate + 5-amino-6-(D-ribitylamino)uracil = 6,7-dimethyl-8-(1-D-ribityl)lumazine + phosphate + 2 H2O + H(+). It participates in cofactor biosynthesis; riboflavin biosynthesis; riboflavin from 2-hydroxy-3-oxobutyl phosphate and 5-amino-6-(D-ribitylamino)uracil: step 1/2. Catalyzes the formation of 6,7-dimethyl-8-ribityllumazine by condensation of 5-amino-6-(D-ribitylamino)uracil with 3,4-dihydroxy-2-butanone 4-phosphate. This is the penultimate step in the biosynthesis of riboflavin. This Photobacterium profundum (strain SS9) protein is 6,7-dimethyl-8-ribityllumazine synthase.